The chain runs to 156 residues: Small ribosomal subunit protein uS7 (156 aa).

This sequence belongs to the universal ribosomal protein uS7 family. Part of the 30S ribosomal subunit. Contacts proteins S9 and S11.

Its function is as follows. One of the primary rRNA binding proteins, it binds directly to 16S rRNA where it nucleates assembly of the head domain of the 30S subunit. Is located at the subunit interface close to the decoding center, probably blocks exit of the E-site tRNA. The protein is Small ribosomal subunit protein uS7 of Geobacter metallireducens (strain ATCC 53774 / DSM 7210 / GS-15).